The following is a 143-amino-acid chain: Hemoglobin subunit alpha (143 aa).

The region spanning 3 to 143 (KLSGEDKANV…TMRLCISKYR (141 aa)) is the Globin domain. An O2-binding site is contributed by H60. Residue H89 participates in heme b binding.

This sequence belongs to the globin family. As to quaternary structure, heterotetramer of two alpha chains and two beta chains. In terms of tissue distribution, red blood cells.

Involved in oxygen transport from the lung to the various peripheral tissues. The protein is Hemoglobin subunit alpha (HBA) of Ambystoma mexicanum (Axolotl).